Here is a 185-residue protein sequence, read N- to C-terminus: MKQTTVGAEILEPYAEALMSLAQSNNLTGRFGEDVAFILDLLKTSPELQQVLANPFVKPESKKAILRQLVAPQVHDFVLKFLLLLVDRRRIFLLEPICKQFQALLRKLTNTVLAEVTSVVELTEPQRQAVIEKVKTMTGSQQVELETRLDPELIGGVIVKVGSQVLDSSIRGQLRRISNTLTSFT.

Belongs to the ATPase delta chain family. F-type ATPases have 2 components, F(1) - the catalytic core - and F(0) - the membrane proton channel. F(1) has five subunits: alpha(3), beta(3), gamma(1), delta(1), epsilon(1). CF(0) has four main subunits: a(1), b(1), b'(1) and c(10-14). The alpha and beta chains form an alternating ring which encloses part of the gamma chain. F(1) is attached to F(0) by a central stalk formed by the gamma and epsilon chains, while a peripheral stalk is formed by the delta, b and b' chains.

Its subcellular location is the cellular thylakoid membrane. In terms of biological role, f(1)F(0) ATP synthase produces ATP from ADP in the presence of a proton or sodium gradient. F-type ATPases consist of two structural domains, F(1) containing the extramembraneous catalytic core and F(0) containing the membrane proton channel, linked together by a central stalk and a peripheral stalk. During catalysis, ATP synthesis in the catalytic domain of F(1) is coupled via a rotary mechanism of the central stalk subunits to proton translocation. Functionally, this protein is part of the stalk that links CF(0) to CF(1). It either transmits conformational changes from CF(0) to CF(1) or is implicated in proton conduction. The protein is ATP synthase subunit delta of Cyanothece sp. (strain PCC 7425 / ATCC 29141).